Reading from the N-terminus, the 484-residue chain is 1,4-beta-D-glucan cellobiohydrolase CEL6A (484 aa).

The signal sequence occupies residues 1 to 17 (MAKRLLLTAALAATTLA). A CBM1 domain is found at 26–62 (NCGSVWSQCGGQGWTGATCCASGSTCVAQNQWYSQCL). 2 disulfides stabilise this stretch: Cys34-Cys51 and Cys45-Cys61. The tract at residues 68–98 (TTTAQAPSSTRTTTSSSSRPTSSSISTSAVN) is disordered. Residues Trp171 and Asp173 each coordinate substrate. A glycan (N-linked (GlcNAc...) asparagine) is linked at Asn175. Residues 208–230 (YDLPDRDCAAAASNGEWAIADGG) are substrate binding loop 1. The Proton donor role is filled by Asp260. Substrate contacts are provided by His305, Trp308, Asn344, Trp405, Lys433, and Glu437. The substrate binding loop 2 stretch occupies residues 431-469 (WIKPGGECDGTSDTTAARYDHHCGFADALKPAPEAGQWF). The active-site Proton acceptor is Asp439.

This sequence belongs to the glycosyl hydrolase 6 (cellulase B) family. As to quaternary structure, monomer. Both N- and O-glycosylated.

Its subcellular location is the secreted. The catalysed reaction is Hydrolysis of (1-&gt;4)-beta-D-glucosidic linkages in cellulose and cellotetraose, releasing cellobiose from the non-reducing ends of the chains.. Its function is as follows. Exoglucanase that plays an important function in biomass degradation by catalyzing the hydrolysis of the non-reducing end beta-1,4-glucosidic linkages in cellulose and cellotetraose to release cellobiose. Hydrolyzes crystalline and amorphous cellulose but is inactive on hydroxyethyl cellulose, mannan, galactomannan, xyloglucan, arabinoxylan, arabinan, xylan, and pectin. The sequence is that of 1,4-beta-D-glucan cellobiohydrolase CEL6A from Podospora anserina (strain S / ATCC MYA-4624 / DSM 980 / FGSC 10383) (Pleurage anserina).